The sequence spans 336 residues: Protease HtpX homolog (336 aa).

The next 2 membrane-spanning stretches (helical) occupy residues 7–24 and 29–48; these read AMLLAAMTALFMGVGFLI and GMMIALLIAAGTNLFSYWNA. Residue H130 participates in Zn(2+) binding. Residue E131 is part of the active site. H134 lines the Zn(2+) pocket. 2 helical membrane-spanning segments follow: residues 145 to 165 and 171 to 191; these read IVATFAGAISMLGNFAFFLGG and PFGFVGVLAAMIVAPFAAMIV. A Zn(2+)-binding site is contributed by E200. A compositionally biased stretch (low complexity) spans 278 to 287; it reads QQMAGGTQAA. The tract at residues 278 to 336 is disordered; sequence QQMAGGTQAAPRPTPRQAGEQQPSGPWGQAPQAEQPAEPERPKANPWGRNPTGPKGRWS.

Belongs to the peptidase M48B family. The cofactor is Zn(2+).

It is found in the cell inner membrane. This chain is Protease HtpX homolog, found in Mesorhizobium japonicum (strain LMG 29417 / CECT 9101 / MAFF 303099) (Mesorhizobium loti (strain MAFF 303099)).